Consider the following 97-residue polypeptide: Serine protease inhibitor Kazal-type 14 (97 aa).

A signal peptide spans Met1 to Ser21. The Kazal-like domain maps to Gly34 to Cys97. 3 cysteine pairs are disulfide-bonded: Cys40-Cys79, Cys57-Cys76, and Cys65-Cys97. Asn51 is a glycosylation site (N-linked (GlcNAc...) asparagine).

The protein resides in the secreted. May be a serine protease inhibitor. The sequence is that of Serine protease inhibitor Kazal-type 14 (SPINK14) from Homo sapiens (Human).